The primary structure comprises 322 residues: MSSVGTAEPDGDQRDRHVSKLIFFLFVFGAALLCVGVLLSIFGYQACQYKPLSHCSIVLKIAGPSCAVVGLGAVILARSRARLHLRERQRQGLQDPDQSFFCGESRQFAQCLIFGFLFLTSGMLISILGIWVPGCDSDWAQEPLNETNTGEGEPQICGFLSLQIMGPLVVLVGLCFFVVAHVKKKNNLSSSRDTSEVEGGHAHSTEPVHITVGDSVIIFPPPPPPYFPESSAAAPSPGANSLHQIENPPSYSSLFNYGTPTPENQGAASEREQELIYTISGQGSSSERSYTGHLPLDLPPRYEEKETAPATPLGAPSDASPP.

The next 4 helical transmembrane spans lie at 22–42 (IFFLFVFGAALLCVGVLLSIF), 57–77 (IVLKIAGPSCAVVGLGAVILA), 112–132 (LIFGFLFLTSGMLISILGIWV), and 159–179 (FLSLQIMGPLVVLVGLCFFVV). The tract at residues 223 to 322 (PPPYFPESSA…LGAPSDASPP (100 aa)) is disordered. Positions 228-241 (PESSAAAPSPGANS) are enriched in low complexity. Polar residues-rich tracts occupy residues 242–267 (LHQIENPPSYSSLFNYGTPTPENQGA) and 279–289 (ISGQGSSSERS).

The protein localises to the membrane. This is Transmembrane protein 171 (Tmem171) from Mus musculus (Mouse).